A 133-amino-acid chain; its full sequence is UPF0102 protein Plav_3586 (133 aa).

The protein belongs to the UPF0102 family.

This is UPF0102 protein Plav_3586 from Parvibaculum lavamentivorans (strain DS-1 / DSM 13023 / NCIMB 13966).